A 342-amino-acid polypeptide reads, in one-letter code: Ferredoxin--NADP reductase (342 aa).

8 residues coordinate FAD: C17, D36, Q44, Y49, I89, F124, D289, and T330.

It belongs to the ferredoxin--NADP reductase type 2 family. As to quaternary structure, homodimer. The cofactor is FAD.

The enzyme catalyses 2 reduced [2Fe-2S]-[ferredoxin] + NADP(+) + H(+) = 2 oxidized [2Fe-2S]-[ferredoxin] + NADPH. In Rhodopseudomonas palustris (strain BisB5), this protein is Ferredoxin--NADP reductase.